We begin with the raw amino-acid sequence, 547 residues long: Cytochrome P450 monooxygenase fsoD (547 aa).

The helical transmembrane segment at 3 to 23 (DITLAAVSIGLFFYVGARAVL) threads the bilayer. Cysteine 490 contacts heme.

This sequence belongs to the cytochrome P450 family. Heme serves as cofactor.

It localises to the membrane. The enzyme catalyses isomotiol + reduced [NADPH--hemoprotein reductase] + O2 = 2alpha-hydroxyisomotiol + oxidized [NADPH--hemoprotein reductase] + H2O + H(+). Its pathway is secondary metabolite biosynthesis; terpenoid biosynthesis. In terms of biological role, cytochrome P450 monooxygenase; part of the gene cluster that mediates the biosynthesis of the enfumafungin-type antibiotic, fuscoatroside. Within the pathway, fsoD catalyzes the hydroxylation at position C2 of isomotiol to produce 2-alpha-hydroxy-isomotiol. FsoD may also hydroxylate the intermediates 3-O-(beta-D-glucopyranosyl)-isomotiol and 2-deacetoxy-fuscoatroside at the same position C2. The fuscoatroside biosynthesis is initiated by the cyclization of 2,3(S)-oxidosqualene through FsoA's terpene cyclase (TC) domain, leading to the formation of the fernane skeleton isomotiol, harboring a fernane triterpene skeleton with a C8-C9 double bond. Subsequently, C2-alpha-hydroxylation mediated by fsoD results in the production of 2-alpha-hydroxy-isomotiol, which is further acetylated by fsoF. The glycosyltransferase (GT) domain of FsoA may convert isomotiol, 2-alpha-hydroxy-isomotiol, and the acetylated derivative of 2-alpha-hydroxy-isomotiol into their corresponding glycosides 3-O-(beta-D-glucopyranosyl)-isomotiol, 3-O-(beta-D-glucopyranosyl)-2-alpha-hydroxy-isomotiol, and 3-O-(beta-D-glucopyranosyl)-2-alpha-acetoxy-isomotiol, which then undergo oxidative cleavage under the action of fsoE to form s 2-deacetoxy-fuscoatroside, 2-deacetyl-fuscoatroside, and fuscoatroside, respectively. Although hydroxylation followed by acetylation of 3-O-(beta-D-glucopyranosyl)-isomotiol and 2-deacetoxy-fuscoatroside by fsoD and fsoF could not be ruled out, this process is likely to occur with difficulty due to bulky steric hindrance caused by the presence of a glycan at C3 in these compounds. Interestingly, fsoE can also utilize the aglycones isomotiol and 2-alpha-hydroxy-isomotiol as substrates to generate 19-beta-hydroxy-isomotiol and 2-alpha,19-beta-dihydroxy-isomotiol, respectively. These reactions occur with lower efficiency. Finally, fsoE can further convert 2-alpha,19-beta-dihydroxy-isomotiol into 2-alpha-hydroxy-ismotiol-19-one and 2-alpha-hydroxy-ismotiol-19-one into 2-deacetyl-3-deglucopyranosyl-fuscoatroside. This Humicola fuscoatra protein is Cytochrome P450 monooxygenase fsoD.